We begin with the raw amino-acid sequence, 281 residues long: 2-dehydro-3-deoxyphosphooctonate aldolase (281 aa).

The protein belongs to the KdsA family.

The protein localises to the cytoplasm. It carries out the reaction D-arabinose 5-phosphate + phosphoenolpyruvate + H2O = 3-deoxy-alpha-D-manno-2-octulosonate-8-phosphate + phosphate. Its pathway is carbohydrate biosynthesis; 3-deoxy-D-manno-octulosonate biosynthesis; 3-deoxy-D-manno-octulosonate from D-ribulose 5-phosphate: step 2/3. It participates in bacterial outer membrane biogenesis; lipopolysaccharide biosynthesis. This Pseudomonas aeruginosa (strain UCBPP-PA14) protein is 2-dehydro-3-deoxyphosphooctonate aldolase.